A 482-amino-acid polypeptide reads, in one-letter code: ATP synthase subunit beta (482 aa).

Residue 162 to 169 (GGAGVGKT) participates in ATP binding.

The protein belongs to the ATPase alpha/beta chains family. F-type ATPases have 2 components, CF(1) - the catalytic core - and CF(0) - the membrane proton channel. CF(1) has five subunits: alpha(3), beta(3), gamma(1), delta(1), epsilon(1). CF(0) has four main subunits: a(1), b(1), b'(1) and c(9-12).

It localises to the cellular thylakoid membrane. It carries out the reaction ATP + H2O + 4 H(+)(in) = ADP + phosphate + 5 H(+)(out). Produces ATP from ADP in the presence of a proton gradient across the membrane. The catalytic sites are hosted primarily by the beta subunits. The protein is ATP synthase subunit beta of Nostoc sp. (strain PCC 7120 / SAG 25.82 / UTEX 2576).